The primary structure comprises 25 residues: Ocellatin-K1 (25 aa).

At Ile-25 the chain carries Isoleucine amide.

Expressed by the skin glands.

The protein resides in the secreted. Its function is as follows. Has hemolytic and antibacterial activity. This chain is Ocellatin-K1, found in Leptodactylus knudseni (Knudsen's thin-toed frog).